Here is a 700-residue protein sequence, read N- to C-terminus: Stonustoxin subunit beta (700 aa).

Residues Pro-2–Ser-264 form a structural MACPF/CDC pore-forming domain region. The structural FAT domain stretch occupies residues Thr-265–Val-384. Residues Ile-385–Lys-514 form a thioredoxin (THX) domain region. The region spanning Tyr-506–Leu-700 is the B30.2/SPRY domain.

Belongs to the SNTX/VTX toxin family. Heterodimer of alpha and beta subunits; non-covalently linked. Post-translationally, intrachain disulfide bonds may be present in the heterodimer. In terms of processing, not glycosylated. In terms of tissue distribution, expressed by the venom gland.

The protein localises to the secreted. This lethal (towards mammals) heterodimer induces hemolytic activities due to its ability to form pores in the cell membrane. The pore may be composed of 10 SNTX-alpha/beta heterodimers. The toxin elicits potent hypotension which is endothelium-dependent and appears to be mediated by the nitric oxide pathway and activation of potassium channels. In addition, it displays edema-inducing activities, increases vascular permeability. It also shows myotoxic activities and interferes irreversibly with neuromuscular function. It also induces irreversible platelet aggregation in rabbit or rat but not in human or mouse whole blood. In addition, it has been observed to increase spontaneous quantal acetylcholine release from isolated frog cutaneous pectoris motor endings. This Synanceia horrida (Estuarine stonefish) protein is Stonustoxin subunit beta.